The primary structure comprises 98 residues: Large ribosomal subunit protein uL23 (98 aa).

It belongs to the universal ribosomal protein uL23 family. In terms of assembly, part of the 50S ribosomal subunit. Contacts protein L29, and trigger factor when it is bound to the ribosome.

Its function is as follows. One of the early assembly proteins it binds 23S rRNA. One of the proteins that surrounds the polypeptide exit tunnel on the outside of the ribosome. Forms the main docking site for trigger factor binding to the ribosome. The protein is Large ribosomal subunit protein uL23 of Rickettsia typhi (strain ATCC VR-144 / Wilmington).